The primary structure comprises 512 residues: Glucose-1-phosphate adenylyltransferase small subunit 2, chloroplastic (512 aa).

Residues 1–21 form a disordered region; sequence MAAIGVLKVPPSSSSSSSSSS. The transit peptide at 1-63 directs the protein to the chloroplast; the sequence is MAAIGVLKVP…RNPFIVSPKA (63 aa). Residues 12–21 show a composition bias toward low complexity; that stretch reads SSSSSSSSSS.

Belongs to the bacterial/plant glucose-1-phosphate adenylyltransferase family. As to quaternary structure, heterotetramer. In terms of tissue distribution, leaves and seeds.

It localises to the plastid. The protein localises to the chloroplast. It catalyses the reaction alpha-D-glucose 1-phosphate + ATP + H(+) = ADP-alpha-D-glucose + diphosphate. The protein operates within glycan biosynthesis; starch biosynthesis. With respect to regulation, activated by 3'phosphoglycerate, inhibited by orthophosphate. Allosteric regulation. Its function is as follows. This protein plays a role in synthesis of starch. It catalyzes the synthesis of the activated glycosyl donor, ADP-glucose from Glc-1-P and ATP. This Vicia faba (Broad bean) protein is Glucose-1-phosphate adenylyltransferase small subunit 2, chloroplastic (AGPP).